A 365-amino-acid chain; its full sequence is Peptide chain release factor 2 (365 aa).

Gln-252 is modified (N5-methylglutamine).

Belongs to the prokaryotic/mitochondrial release factor family. Post-translationally, methylated by PrmC. Methylation increases the termination efficiency of RF2.

Its subcellular location is the cytoplasm. Functionally, peptide chain release factor 2 directs the termination of translation in response to the peptide chain termination codons UGA and UAA. In Shigella flexneri, this protein is Peptide chain release factor 2.